The primary structure comprises 551 residues: Seventh homolog of septin 1 (551 aa).

An N-acetylserine modification is found at Ser-2. The Septin-type G domain occupies 20-339 (RGITYTMLLC…ENYRSEKLSS (320 aa)). Residues 30–37 (GPAGTGKT) are G1 motif. Residues 30–37 (GPAGTGKT), Gly-138, 218–226 (RADSFTKEE), and Arg-288 each bind GTP. The interval 135-138 (MTHG) is G3 motif. The segment at 217–220 (TRAD) is G4 motif. Residues 381–417 (NLRADTPRNQVSGNFKENEYEDNGEHDSAENEQEMSP) form a disordered region. Tyr-400 carries the post-translational modification Phosphotyrosine. Ser-408 and Ser-416 each carry phosphoserine. Residues 418-518 (VRQLGREIKQ…KLINQNKLNG (101 aa)) adopt a coiled-coil conformation. Residues Lys-426 and Lys-437 each participate in a glycyl lysine isopeptide (Lys-Gly) (interchain with G-Cter in SUMO) cross-link. Ser-447, Ser-460, Ser-519, Ser-520, Ser-522, and Ser-525 each carry phosphoserine. The segment at 515–551 (KLNGSSSSINSLQQSTRSQIKKNDTYTDLASIASGRD) is disordered. The span at 519 to 532 (SSSSINSLQQSTRS) shows a compositional bias: low complexity. A Phosphothreonine modification is found at Thr-539. A phosphoserine mark is found at Ser-545 and Ser-548.

It belongs to the TRAFAC class TrmE-Era-EngA-EngB-Septin-like GTPase superfamily. Septin GTPase family. Component of the septin complex which consists of CDC3, CDC10, CDC11, CDC12 and probably SHS1 and rearranges to a cortical collar of highly ordered filaments at the mother-bud-neck. A complex formed by CDC3, CDC10, CDC11 and CDC12 is capable of forming long filaments in vitro and the components seem to be present in a 2:2:2:2 arrangement in vivo. The filaments are proposed to be formed by the end-to-end polymerization of CDC3-CDC12-CDC11 complexes with CDC10 serving as a bridge to bundle the polymers into paired filaments. Component of the GIN4 complex composed of at least BNI5, CDC3, CDC10, CDC11, CDC12, GIN4, NAP1 and SHS1. Self-associates. Interacts with CDC11 and SPA2. Phosphorylated by GIN4 and CLA4. Phosphorylation state is essential for septin ring dynamics during telophase. In terms of processing, sumoylated during mitosis on the mother cell side of the bud neck. Sumoylation probably plays a central role in regulating septin ring disassembly during the cell cycle.

The protein resides in the membrane. Its subcellular location is the bud neck. In terms of biological role, septins are GTPases involved in cytokinesis that assemble early in the cell cycle as a patch at the incipient bud site and form a ring approximately 15 minutes before bud emergence, which transforms into an hour-glass shaped collar of cortical filaments that spans both sides of the mother-bud neck. This collar persists until just before cytokinesis, when it splits into two rings that occupy opposite sides of the neck. The septins at the bud neck serve as a structural scaffold that recruits different components involved in diverse processes at specific stages during the cell cycle. Many proteins bind asymmetrically to the septin collar. The septin assembly is regulated by protein kinases GIN4 and/or CLA4. May act by recruiting MYO1 and HOF1, a protein involved in septation, to the site of cleavage. Septins are also involved in cell morphogenesis, bud site selection, chitin deposition, cell cycle regulation, cell compartmentalization and spore wall formation. CDCd11 with SHS1 11 are involved in the recruitment of BNI5 and thereby ensure efficient localization at the bud neck of MYO1, the type II myosin of the actomyosin contractile ring. This chain is Seventh homolog of septin 1, found in Saccharomyces cerevisiae (strain ATCC 204508 / S288c) (Baker's yeast).